We begin with the raw amino-acid sequence, 217 residues long: Oxygen regulatory protein NreC (217 aa).

The region spanning 2 to 119 (KIVIADDHAV…QLISAVRTVY (118 aa)) is the Response regulatory domain. Position 53 is a 4-aspartylphosphate (aspartate 53). The region spanning 148–213 (TNDPFRILSK…ELVEYALKKK (66 aa)) is the HTH luxR-type domain. Positions 172-191 (NKEIAEKLFVSVKTVEAHKT) form a DNA-binding region, H-T-H motif.

Phosphorylated by NreB.

It is found in the cytoplasm. Member of the two-component regulatory system NreB/NreC involved in the control of dissimilatory nitrate/nitrite reduction in response to oxygen. Phosphorylated NreC binds to a GC-rich palindromic sequence at the promoters of the nitrate (narGHJI) and nitrite (nir) reductase operons, as well as the putative nitrate transporter gene narT, and activates their expression. This is Oxygen regulatory protein NreC (nreC) from Staphylococcus carnosus (strain TM300).